Here is a 669-residue protein sequence, read N- to C-terminus: Elongation factor G 2 (669 aa).

In terms of domain architecture, tr-type G spans 1 to 276; sequence MGIRNIGIMA…SIVDYLPSPF (276 aa). GTP is bound by residues 10 to 17, 74 to 78, and 128 to 131; these read AHIDAGKT, DTPGH, and NKMD.

Belongs to the TRAFAC class translation factor GTPase superfamily. Classic translation factor GTPase family. EF-G/EF-2 subfamily.

Its subcellular location is the cytoplasm. In terms of biological role, catalyzes the GTP-dependent ribosomal translocation step during translation elongation. During this step, the ribosome changes from the pre-translocational (PRE) to the post-translocational (POST) state as the newly formed A-site-bound peptidyl-tRNA and P-site-bound deacylated tRNA move to the P and E sites, respectively. Catalyzes the coordinated movement of the two tRNA molecules, the mRNA and conformational changes in the ribosome. The sequence is that of Elongation factor G 2 (fusA2) from Borreliella afzelii (strain PKo) (Borrelia afzelii).